Reading from the N-terminus, the 159-residue chain is UPF0262 protein CCNA_02430 (159 aa).

It belongs to the UPF0262 family.

The sequence is that of UPF0262 protein CCNA_02430 from Caulobacter vibrioides (strain NA1000 / CB15N) (Caulobacter crescentus).